The primary structure comprises 646 residues: Peptidylprolyl isomerase domain and WD repeat-containing protein 1 (646 aa).

Positions 1–50 are disordered; that stretch reads MATESGSDSQLRRRRRRDPEGSEKTELSEREPALAVAGSEENDDENEERW. Ala-2 bears the N-acetylalanine mark. Basic and acidic residues predominate over residues 17–32; sequence RDPEGSEKTELSEREP. WD repeat units follow at residues 88 to 126, 131 to 170, 221 to 260, and 278 to 319; these read MHRD…IEFV, SHLG…MINM, LHVS…YKFP, and KCKA…RVFD. In terms of domain architecture, PPIase cyclophilin-type spans 490 to 645; sequence VSDSAIVHTS…EDVSIINITV (156 aa).

It belongs to the cyclophilin-type PPIase family. PPIL1 subfamily. As to quaternary structure, identified in the spliceosome C complex.

It localises to the nucleus. It catalyses the reaction [protein]-peptidylproline (omega=180) = [protein]-peptidylproline (omega=0). With respect to regulation, inhibited by cyclosporin A (CsA). Its function is as follows. PPIase that catalyzes the cis-trans isomerization of proline imidic peptide bonds in oligopeptides and may therefore assist protein folding. May be involved in pre-mRNA splicing. In Mus musculus (Mouse), this protein is Peptidylprolyl isomerase domain and WD repeat-containing protein 1.